A 584-amino-acid chain; its full sequence is MAHERGHLQLPRADAIRSKLIDTFSLIEHLQGLSQAVPRHTLREILDPACQKKLMLGDQEQLVRFSIRARRMGHITHAQRLLSRLRVRCGGRPPLSLWAGWVLDSSIFSNFIISLIFLNTFVLMVEIELMNSTNTSLWPLKLALEVTDWFILLSFIVEILLMWLASFFLFWKNAWSVFDFVVTMLSLLPEFVVLIGVSADSVWLQLLRVSRVLRSLKLFARFPQIKVILLALVRALKSMTFLLMLLLIFFYVFAVAGVYFFKEYSRSTIENLEYNMFFSDLLNSLVTVFILFTLDHWYAVLQDVWKVPEASRVFSSIYVILWLLLGSIIFRNIIVAMMVTNFQNIRNELHEEMTHLEVQYKADIFKRRIIQRRQQSESLRGTSQGKVSEDITETSEATDEEKSEAEESEEEKSEEEKSDVEKSDEEKNDEEKSDEEENDEEKSDVEKSDEEKNDEEKGYTEKVYSGRTFVERSYAERSFAGKAENEKVQKELKEKAYPGSPPNSSSHDEAFAADDTYLENLDWETLVHENLPGLMDMDQDDRVVWPRDSLFRYFELLESLQYNLEERKRLQEFAVQALMNFEDK.

Residues 1–106 are Cytoplasmic-facing; it reads MAHERGHLQL…LWAGWVLDSS (106 aa). The helical transmembrane segment at 107–129 threads the bilayer; it reads IFSNFIISLIFLNTFVLMVEIEL. Over 130-138 the chain is Extracellular; sequence MNSTNTSLW. A helical membrane pass occupies residues 139-164; it reads PLKLALEVTDWFILLSFIVEILLMWL. At 165-173 the chain is on the cytoplasmic side; it reads ASFFLFWKN. A helical transmembrane segment spans residues 174 to 198; that stretch reads AWSVFDFVVTMLSLLPEFVVLIGVS. Residues 199-201 lie on the Extracellular side of the membrane; the sequence is ADS. The helical transmembrane segment at 202–220 threads the bilayer; it reads VWLQLLRVSRVLRSLKLFA. Topologically, residues 221 to 237 are cytoplasmic; it reads RFPQIKVILLALVRALK. Residues 238-260 traverse the membrane as a helical segment; that stretch reads SMTFLLMLLLIFFYVFAVAGVYF. Residues 261 to 279 lie on the Extracellular side of the membrane; that stretch reads FKEYSRSTIENLEYNMFFS. An intramembrane region (helical; Pore-forming) is located at residues 280–292; the sequence is DLLNSLVTVFILF. Residues 293–312 lie on the Extracellular side of the membrane; it reads TLDHWYAVLQDVWKVPEASR. Residues 313 to 339 traverse the membrane as a helical segment; the sequence is VFSSIYVILWLLLGSIIFRNIIVAMMV. Topologically, residues 340-584 are cytoplasmic; that stretch reads TNFQNIRNEL…VQALMNFEDK (245 aa). Over residues 376–386 the composition is skewed to polar residues; that stretch reads SESLRGTSQGK. Disordered regions lie at residues 376–460 and 480–510; these read SESL…KGYT and AGKA…HDEA. 2 stretches are compositionally biased toward acidic residues: residues 390 to 418 and 426 to 443; these read DITE…EEKS and EKND…EEKS. 2 stretches are compositionally biased toward basic and acidic residues: residues 444–460 and 483–496; these read DVEK…KGYT and AENE…KEKA.

This sequence belongs to the cation channel sperm-associated (TC 1.A.1.19) family. As to quaternary structure, component of the CatSper complex or CatSpermasome composed of the core pore-forming members CATSPER1, CATSPER2, CATSPER3 and CATSPER4 as well as auxiliary members CATSPERB, CATSPERG, CATSPERD, CATSPERE, CATSPERZ, C2CD6/CATSPERT, SLCO6C1, TMEM249, TMEM262 and EFCAB9. HSPA1 may be an additional auxiliary complex member. The core complex members CATSPER1, CATSPER2, CATSPER3 and CATSPER4 form a heterotetrameric channel. The auxiliary CATSPERB, CATSPERG, CATSPERD and CATSPERE subunits form a pavilion-like structure over the pore which stabilizes the complex through interactions with CATSPER4, CATSPER3, CATSPER1 and CATSPER2 respectively. SLCO6C1 interacts with CATSPERE and TMEM262/CATSPERH interacts with CATSPERB, further stabilizing the complex. C2CD6/CATSPERT interacts at least with CATSPERD and is required for targeting the CatSper complex in the flagellar membrane. Interacts with Ca(v)3.3/CACNA1I, leading to suppression of T-type calcium channel activity.

The protein localises to the cell projection. It is found in the cilium. The protein resides in the flagellum membrane. The enzyme catalyses Ca(2+)(in) = Ca(2+)(out). Activated by intracellular alkalinization. Its function is as follows. Pore-forming subunit of the CatSper complex, a sperm-specific voltage-gated calcium channel that plays a central role in sperm cell hyperactivation. Controls calcium entry to mediate the hyperactivated motility, a step needed for sperm motility which is essential late in the preparation of sperm for fertilization. The protein is Cation channel sperm-associated protein 2 (Catsper2) of Rattus norvegicus (Rat).